A 323-amino-acid polypeptide reads, in one-letter code: NADH-cytochrome b5 reductase 2 (323 aa).

Residues 30 to 46 form a helical membrane-spanning segment; it reads LAPIYTAVGLTGLSVGL. The FAD-binding FR-type domain maps to 72-177; that stretch reads QGWVDLKLSE…KGPLPKYQWE (106 aa). 180–215 contributes to the FAD binding site; the sequence is KHEHIALIAGGTGITPMYQLIRQIFKNPDDKTKVTL.

This sequence belongs to the flavoprotein pyridine nucleotide cytochrome reductase family. It depends on FAD as a cofactor.

It is found in the mitochondrion outer membrane. The enzyme catalyses 2 Fe(III)-[cytochrome b5] + NADH = 2 Fe(II)-[cytochrome b5] + NAD(+) + H(+). Its function is as follows. May mediate the reduction of outer membrane cytochrome b5. This chain is NADH-cytochrome b5 reductase 2 (mcr1), found in Aspergillus oryzae (strain ATCC 42149 / RIB 40) (Yellow koji mold).